Here is a 139-residue protein sequence, read N- to C-terminus: Ubiquitin-conjugating enzyme spm2 (139 aa).

In terms of domain architecture, UBC core spans 5 to 139; sequence PRNFKLLEEL…PQPPEGSTFF (135 aa).

The protein belongs to the ubiquitin-conjugating enzyme family. In terms of assembly, heterodimer with ubc13.

Has a role in the DNA error-free postreplication repair (PRR) pathway. Lacks catalytic activity by itself. The ubc13/spm2 heterodimer catalyzes the synthesis of non-canonical poly-ubiquitin chains that are linked through 'Lys-63'. In Schizosaccharomyces pombe (strain 972 / ATCC 24843) (Fission yeast), this protein is Ubiquitin-conjugating enzyme spm2 (spm2).